Reading from the N-terminus, the 375-residue chain is Queuine tRNA-ribosyltransferase (375 aa).

Residue aspartate 94 is the Proton acceptor of the active site. Substrate is bound by residues 94-98 (DSGGF), aspartate 148, glutamine 191, and glycine 218. Positions 249–255 (GVGSPDD) are RNA binding. Aspartate 268 acts as the Nucleophile in catalysis. The segment at 273–277 (TRIAR) is RNA binding; important for wobble base 34 recognition. Positions 306, 308, 311, and 337 each coordinate Zn(2+).

This sequence belongs to the queuine tRNA-ribosyltransferase family. In terms of assembly, homodimer. Within each dimer, one monomer is responsible for RNA recognition and catalysis, while the other monomer binds to the replacement base PreQ1. It depends on Zn(2+) as a cofactor.

It catalyses the reaction 7-aminomethyl-7-carbaguanine + guanosine(34) in tRNA = 7-aminomethyl-7-carbaguanosine(34) in tRNA + guanine. Its pathway is tRNA modification; tRNA-queuosine biosynthesis. Functionally, catalyzes the base-exchange of a guanine (G) residue with the queuine precursor 7-aminomethyl-7-deazaguanine (PreQ1) at position 34 (anticodon wobble position) in tRNAs with GU(N) anticodons (tRNA-Asp, -Asn, -His and -Tyr). Catalysis occurs through a double-displacement mechanism. The nucleophile active site attacks the C1' of nucleotide 34 to detach the guanine base from the RNA, forming a covalent enzyme-RNA intermediate. The proton acceptor active site deprotonates the incoming PreQ1, allowing a nucleophilic attack on the C1' of the ribose to form the product. After dissociation, two additional enzymatic reactions on the tRNA convert PreQ1 to queuine (Q), resulting in the hypermodified nucleoside queuosine (7-(((4,5-cis-dihydroxy-2-cyclopenten-1-yl)amino)methyl)-7-deazaguanosine). The protein is Queuine tRNA-ribosyltransferase of Thermoanaerobacter sp. (strain X514).